A 128-amino-acid chain; its full sequence is Mediator of RNA polymerase II transcription subunit 31-A (128 aa).

It belongs to the Mediator complex subunit 31 family. As to quaternary structure, component of the Mediator complex.

It localises to the nucleus. Functionally, component of the Mediator complex, a coactivator involved in the regulated transcription of nearly all RNA polymerase II-dependent genes. Mediator functions as a bridge to convey information from gene-specific regulatory proteins to the basal RNA polymerase II transcription machinery. Mediator is recruited to promoters by direct interactions with regulatory proteins and serves as a scaffold for the assembly of a functional preinitiation complex with RNA polymerase II and the general transcription factors. The chain is Mediator of RNA polymerase II transcription subunit 31-A (med31-a) from Xenopus laevis (African clawed frog).